The sequence spans 137 residues: F420H(2)-dependent biliverdin reductase (137 aa).

Coenzyme F420-(gamma-Glu)n contacts are provided by residues 36–41 (HVVAVG), 54–55 (IT), 60–61 (QK), Arg-67, and 78–81 (GARW).

This sequence belongs to the F420H(2)-dependent biliverdin reductase family. Homodimer.

The protein localises to the cell surface. It localises to the secreted. The catalysed reaction is (4Z,15Z)-bilirubin IXalpha + oxidized coenzyme F420-(gamma-L-Glu)(n) + H(+) = biliverdin IXalpha + reduced coenzyme F420-(gamma-L-Glu)(n). Functionally, catalyzes the F420H(2)-dependent reduction of biliverdin-IXalpha at C10 position, leading to bilirubin-IXalpha, a potent antioxidant. As biliverdin-IXalpha is produced in high amounts in macrophages infected with M.tuberculosis, its reduction by Rv2074 may play a role in protecting mycobacteria against oxidative stress, aiding the persistence of M.tuberculosis infection. The sequence is that of F420H(2)-dependent biliverdin reductase from Mycobacterium tuberculosis (strain CDC 1551 / Oshkosh).